The following is a 430-amino-acid chain: Divergent protein kinase domain 2A (430 aa).

The signal sequence occupies residues M1–L35.

It belongs to the DIPK family. As to expression, expressed in heart, brain, liver, spleen, kidney, lung, thymus, testis, ovary and muscle.

The protein resides in the golgi apparatus. Its subcellular location is the cytoplasmic vesicle. It localises to the COPI-coated vesicle. It is found in the secreted. Functionally, may play a role in cardiomyocyte proliferation through paracrine signaling and activation of the PI3-kinase signaling cascade. This chain is Divergent protein kinase domain 2A (Dipk2a), found in Mus musculus (Mouse).